The sequence spans 99 residues: Protein translation factor SUI1 homolog (99 aa).

This sequence belongs to the SUI1 family.

The sequence is that of Protein translation factor SUI1 homolog from Picrophilus torridus (strain ATCC 700027 / DSM 9790 / JCM 10055 / NBRC 100828 / KAW 2/3).